The sequence spans 347 residues: NADH-ubiquinone oxidoreductase chain 2 (347 aa).

Transmembrane regions (helical) follow at residues 13-33 (IVLG…WMGF), 59-79 (YFLT…INLV), 96-116 (IIMT…FWVP), 122-142 (ISLL…LSVL), 144-164 (VISP…SILI), 178-200 (ILAY…NPMM), 210-232 (LMTA…ALSH), 246-266 (IIML…KWMI), 276-296 (IILA…YMRL), and 326-346 (LPML…MILL).

The protein belongs to the complex I subunit 2 family. As to quaternary structure, core subunit of respiratory chain NADH dehydrogenase (Complex I) which is composed of 45 different subunits. Interacts with TMEM242.

The protein localises to the mitochondrion inner membrane. The catalysed reaction is a ubiquinone + NADH + 5 H(+)(in) = a ubiquinol + NAD(+) + 4 H(+)(out). Its function is as follows. Core subunit of the mitochondrial membrane respiratory chain NADH dehydrogenase (Complex I) which catalyzes electron transfer from NADH through the respiratory chain, using ubiquinone as an electron acceptor. Essential for the catalytic activity and assembly of complex I. The protein is NADH-ubiquinone oxidoreductase chain 2 of Rhynchonycteris naso (Brazilian long-nosed bat).